Reading from the N-terminus, the 325-residue chain is Natural cytotoxicity triggering receptor 1 (325 aa).

Residues 1 to 16 (MLPTLTALLCLGLCLS) form the signal peptide. Residues 17-255 (QRINTEKETL…SAFWDHTTQN (239 aa)) lie on the Extracellular side of the membrane. Ig-like domains are found at residues 34–118 (KPSI…LVVT) and 129–211 (YPRP…LLIT). Cysteine 49 and cysteine 98 form a disulfide bridge. N-linked (GlcNAc...) asparagine glycosylation is present at asparagine 139. A disulfide bridge connects residues cysteine 144 and cysteine 190. N-linked (GlcNAc...) asparagine glycosylation is found at asparagine 216 and asparagine 238. Residues 256 to 273 (LIRIGLACIILITLVWLL) form a helical membrane-spanning segment. Residues 274-325 (TEDWLSKRKDHEEANRLTNWECRRRWRMQHYFEEEQRNAISMMELKATPGAL) lie on the Cytoplasmic side of the membrane.

This sequence belongs to the natural cytotoxicity receptor (NCR) family. In terms of assembly, interacts with CD3Z and FCER1G. In terms of tissue distribution, selectively expressed by NK cells.

Its subcellular location is the cell membrane. Its function is as follows. Cytotoxicity-activating receptor that may contribute to the increased efficiency of activated natural killer (NK) cells to mediate tumor cell lysis. This Mus musculus (Mouse) protein is Natural cytotoxicity triggering receptor 1 (Ncr1).